Reading from the N-terminus, the 151-residue chain is Large ribosomal subunit protein uL22 (151 aa).

The segment covering 1–18 (MARINYSINADPENTSKA) has biased composition (polar residues). The tract at residues 1 to 23 (MARINYSINADPENTSKAMGSEL) is disordered.

This sequence belongs to the universal ribosomal protein uL22 family. In terms of assembly, part of the 50S ribosomal subunit.

In terms of biological role, this protein binds specifically to 23S rRNA. It makes multiple contacts with different domains of the 23S rRNA in the assembled 50S subunit and ribosome. Functionally, the globular domain of the protein is located near the polypeptide exit tunnel on the outside of the subunit, while an extended beta-hairpin is found that lines the wall of the exit tunnel in the center of the 70S ribosome. This is Large ribosomal subunit protein uL22 from Methanosarcina mazei (strain ATCC BAA-159 / DSM 3647 / Goe1 / Go1 / JCM 11833 / OCM 88) (Methanosarcina frisia).